The primary structure comprises 50 residues: Photosystem II reaction center protein M (50 aa).

A helical membrane pass occupies residues 6–26; it reads FGFVASLLFVGVPTIFLIGLF.

The protein belongs to the PsbM family. PSII is composed of 1 copy each of membrane proteins PsbA, PsbB, PsbC, PsbD, PsbE, PsbF, PsbH, PsbI, PsbJ, PsbK, PsbL, PsbM, PsbT, PsbX, PsbY, Psb30/Ycf12, peripheral proteins PsbO, CyanoQ (PsbQ), PsbU, PsbV and a large number of cofactors. It forms dimeric complexes.

Its subcellular location is the cellular thylakoid membrane. In terms of biological role, one of the components of the core complex of photosystem II (PSII). PSII is a light-driven water:plastoquinone oxidoreductase that uses light energy to abstract electrons from H(2)O, generating O(2) and a proton gradient subsequently used for ATP formation. It consists of a core antenna complex that captures photons, and an electron transfer chain that converts photonic excitation into a charge separation. This subunit is found at the monomer-monomer interface. The chain is Photosystem II reaction center protein M from Prochlorococcus marinus (strain MIT 9215).